Consider the following 203-residue polypeptide: Mediator of RNA polymerase II transcription subunit 22 (203 aa).

Positions 93–123 (SVNEAINQRNQQLRSLQEECDKKLIALRDEI) form a coiled coil. Residues 164–188 (ESLSMPLTTATAEQSIATSQSSTPS) show a composition bias toward polar residues. The segment at 164 to 203 (ESLSMPLTTATAEQSIATSQSSTPSHPHVNGHGAGPTDHS) is disordered.

It belongs to the Mediator complex subunit 22 family. As to quaternary structure, component of the Mediator complex.

The protein localises to the nucleus. In terms of biological role, component of the Mediator complex, a coactivator involved in the regulated transcription of nearly all RNA polymerase II-dependent genes. Mediator functions as a bridge to convey information from gene-specific regulatory proteins to the basal RNA polymerase II transcription machinery. Mediator is recruited to promoters by direct interactions with regulatory proteins and serves as a scaffold for the assembly of a functional preinitiation complex with RNA polymerase II and the general transcription factors. This is Mediator of RNA polymerase II transcription subunit 22 (MED22) from Gallus gallus (Chicken).